The sequence spans 470 residues: UDP-N-acetylmuramoylalanine--D-glutamate ligase (470 aa).

124 to 130 (GTNGKTT) serves as a coordination point for ATP.

It belongs to the MurCDEF family.

It localises to the cytoplasm. The enzyme catalyses UDP-N-acetyl-alpha-D-muramoyl-L-alanine + D-glutamate + ATP = UDP-N-acetyl-alpha-D-muramoyl-L-alanyl-D-glutamate + ADP + phosphate + H(+). Its pathway is cell wall biogenesis; peptidoglycan biosynthesis. In terms of biological role, cell wall formation. Catalyzes the addition of glutamate to the nucleotide precursor UDP-N-acetylmuramoyl-L-alanine (UMA). This Prochlorococcus marinus (strain SARG / CCMP1375 / SS120) protein is UDP-N-acetylmuramoylalanine--D-glutamate ligase.